A 314-amino-acid polypeptide reads, in one-letter code: Olfactory receptor 5D14 (314 aa).

Residues 1–27 (MMMVLRNLSMEPTFALLGFTDYPKLQI) are Extracellular-facing. Asparagine 7 carries an N-linked (GlcNAc...) asparagine glycan. A helical transmembrane segment spans residues 28–48 (PLFLVFLLMYVITVVGNLGMI). The Cytoplasmic segment spans residues 49–56 (IIIKINPK). Residues 57 to 77 (FHTPMYFFLSHLSFVDFCYSS) form a helical membrane-spanning segment. Residues 78 to 101 (IVTPKLLENLVMADKSIFYFSCMM) are Extracellular-facing. A helical transmembrane segment spans residues 102–122 (QYFLSCTAVVTESFLLAVMAY). At 123–141 (DRFVAICNPLLYTVAMSQR) the chain is on the cytoplasmic side. Residues 142–162 (LCALLVAGSYLWGMFGPLVLL) form a helical membrane-spanning segment. Residues 163–198 (CYALRLNFSGPNVINHFFCEYTALISVSGSDILIPH) lie on the Extracellular side of the membrane. N-linked (GlcNAc...) asparagine glycosylation occurs at asparagine 169. The chain crosses the membrane as a helical span at residues 199 to 219 (LLLFSFATFNEMCTLLIILTS). At 220-239 (YVFIFVTVLKIRSVSGRHKA) the chain is on the cytoplasmic side. Residues 240 to 260 (FSTWASHLTSITIFHGTILFL) form a helical membrane-spanning segment. At 261–273 (YCVPNSKNSRQTV) the chain is on the extracellular side. A helical membrane pass occupies residues 274–294 (KVASVFYTVVNPMLNPLIYSL). Topologically, residues 295–314 (RNKDVKDAFWKLIHTQVPFH) are cytoplasmic.

It belongs to the G-protein coupled receptor 1 family.

Its subcellular location is the cell membrane. Odorant receptor. This Homo sapiens (Human) protein is Olfactory receptor 5D14 (OR5D14).